A 90-amino-acid chain; its full sequence is Large ribosomal subunit protein eL31 (90 aa).

This sequence belongs to the eukaryotic ribosomal protein eL31 family.

This is Large ribosomal subunit protein eL31 from Thermococcus gammatolerans (strain DSM 15229 / JCM 11827 / EJ3).